Consider the following 307-residue polypeptide: Nodulation protein NoeC (307 aa).

8 helical membrane passes run 46–66 (APLW…YVLN), 91–111 (SGLT…VCAI), 117–137 (LFAI…KVRG), 140–160 (VLDL…GATA), 163–183 (IPVP…LASI), 212–232 (IVAL…ELFV), 238–258 (AQGP…AYWI), and 279–299 (VTDG…VFLM).

Its subcellular location is the cell membrane. This is Nodulation protein NoeC (noeC) from Azorhizobium caulinodans (strain ATCC 43989 / DSM 5975 / JCM 20966 / LMG 6465 / NBRC 14845 / NCIMB 13405 / ORS 571).